Here is a 66-residue protein sequence, read N- to C-terminus: Prokaryotic ubiquitin-like protein UBact (66 aa).

Residues 1–66 form a disordered region; sequence MNMRYTLMPE…AERYRQRTGE (66 aa). The segment covering 30–66 has biased composition (basic and acidic residues); sequence GGPRRPETGSPDKDNLLKRMRKVDPKQAERYRQRTGE. Glutamate 66 is covalently cross-linked (Isoglutamyl lysine isopeptide (Glu-Lys) (interchain with K-? in acceptor proteins)).

Belongs to the ubiquitin-like protein UBact family.

Its function is as follows. May function as a protein modifier covalently attached to lysine residues of substrate proteins. This may serve to target the modified proteins for degradation by proteasomes. In Nitrospira moscoviensis, this protein is Prokaryotic ubiquitin-like protein UBact.